The primary structure comprises 303 residues: Diaminopimelate epimerase (303 aa).

Asn14 contributes to the substrate binding site. Positions 60–74 (PVSSAGATADAAAGR) are enriched in low complexity. Positions 60-86 (PVSSAGATADAAAGRPPQPSAGRPPQP) are disordered. Pro residues predominate over residues 75-86 (PPQPSAGRPPQP). Position 97 (Asn97) interacts with substrate. Cys106 acts as the Proton donor in catalysis. Residues 107–108 (GN), Asn178, Asn209, and 227–228 (ER) contribute to the substrate site. Cys236 (proton acceptor) is an active-site residue. 237–238 (GS) is a binding site for substrate.

This sequence belongs to the diaminopimelate epimerase family. As to quaternary structure, homodimer.

Its subcellular location is the cytoplasm. The catalysed reaction is (2S,6S)-2,6-diaminopimelate = meso-2,6-diaminopimelate. Its pathway is amino-acid biosynthesis; L-lysine biosynthesis via DAP pathway; DL-2,6-diaminopimelate from LL-2,6-diaminopimelate: step 1/1. Its function is as follows. Catalyzes the stereoinversion of LL-2,6-diaminopimelate (L,L-DAP) to meso-diaminopimelate (meso-DAP), a precursor of L-lysine and an essential component of the bacterial peptidoglycan. The polypeptide is Diaminopimelate epimerase (Acidothermus cellulolyticus (strain ATCC 43068 / DSM 8971 / 11B)).